We begin with the raw amino-acid sequence, 224 residues long: Putative ankyrin repeat protein R845 (224 aa).

ANK repeat units follow at residues 1–14 (MVEYLVSLGADVRS), 15–44 (NYDHAIKSAFENGHLQVIKYLISLGSDVSM), 46–74 (YDYILLRASRNGYIDVVKYLIEQGVDPRT), 75–104 (NNDKAVRKASKNGRLEIVEYLVTLGADIRI), 105–134 (DNDSAVRWASKNGHIKTVEFLVAKGADIRA), 136–164 (NDYSLRHSSKHGHIKMVEYLVAQGADVRA), 165–194 (DNDYAIKWASGKGHLEVVKYLVEKGADFRA), and 196–224 (NDCAVKWASQTGRVEIVEYLVSKGAVCPY).

The chain is Putative ankyrin repeat protein R845 from Acanthamoeba polyphaga mimivirus (APMV).